Reading from the N-terminus, the 933-residue chain is MSLVSQNSRRRRGGRANGRKNSGKGRPAAVPGPAVPRDRSDPQILQGLGATEGPGTSVLPTPRGGSSTSVPPTASEGSSAPGQLITSEGRNTSQLPTSRKGRGTRRPPAVSAGLNAAASITASEGASTPVLPTAPKGSKASEHLTISEGASISEQPQSHEGPNVQPTLGEGSGTSVPPTFSEESGISEPLPSGEGLSISVSPTISEGAGINEPSPASKAPSTSVPPTASNGLGINLPPTSSEGLSISVLFSASEESDISVPPPSAEGLSTSMPPPSGEVQSTWVPPIILEGCSVKVRSTSRKGRRTPVRSAACESPSPSAECLSTSLSSISAEGFCSSLAPCAEGSDTCELLPCGEGPSTSGLHDLEEESSISQMPLAAEGPSASGSSIEDENPEEALSCGASVGMNLCKCTSLALQKADDPSVRPKRAEGFLDFQVLRDSENSNSITIMGLGTAHVALTLKPQDPMEQNVAELLQFLLLKDQTKYPIKESEMREFIVQEYRNQFPEILRRAAAHLECIFRFELKELDPEEHTYILLNKLGPVPFEGLEDIPNGPKMGLLMMILGQIFLNGNQAREADIWEMLWRFGVQRERRLSVFGNPKRLLSVEFVWQRYLDYRPITDCVPVEYEFYWGPRSHVETTKMKILKFMARIYNKDPMDWPAQYNEALEEEAERDVPNNWRAVPHFRRPLFQEVSPELLASDSDAPGCPSKYSPHSWPESRLESKSRKLVQLFLLMDSTKLPIPKKGILYYIGRECSKVFPDLLNRAARTLNHVYGTELVVLDPRNHSYTLYNRREMEDMEEIMDSPNRPGNNFLMQVLSFIFIMGNHARESAVWAFLRGLGVQNGRKHVITCRYLSQRYIDSLRVPDSDPVQYDFVWGPRARLETSKMKALRYVARIHRKEPQDWPDQYREALEDEANRAEAGRRPLVVRNLR.

Disordered stretches follow at residues 1–113, 149–236, 256–282, and 360–393; these read MSLV…VSAG, GASI…GINL, SDIS…VQST, and TSGL…EDEN. The span at 8 to 23 shows a compositional bias: basic residues; that stretch reads SRRRRGGRANGRKNSG. 4 stretches are compositionally biased toward polar residues: residues 64–97, 149–166, 173–184, and 219–236; these read GGSS…QLPT, GASI…NVQP, GTSVPPTFSEES, and APST…GINL. 2 MAGE domains span residues 467–666 and 721–912; these read MEQN…YNEA and LESK…YREA. An interaction with DTNA region spans residues 719 to 933; it reads SRLESKSRKL…RRPLVVRNLR (215 aa).

In terms of assembly, interacts with DTNA. Interacts with TRIM28.

Its subcellular location is the cytoplasm. It localises to the perinuclear region. It is found in the nucleus. The protein localises to the cell membrane. May enhance ubiquitin ligase activity of RING-type zinc finger-containing E3 ubiquitin-protein ligases. Proposed to act through recruitment and/or stabilization of the Ubl-conjugating enzyme (E2) at the E3:substrate complex. This Rattus norvegicus (Rat) protein is Melanoma-associated antigen E1 (Magee1).